Consider the following 404-residue polypeptide: Metacaspase-1A (404 aa).

The segment covering 1–10 (MNPHHSHHHS) has biased composition (basic residues). The segment at 1-100 (MNPHHSHHHS…PSDPVSFGQG (100 aa)) is disordered. Positions 24–51 (QQQPPSNPYQYNQPSPQPYQGSQPPQNG) are enriched in low complexity. Catalysis depends on residues His-200 and Cys-256.

This sequence belongs to the peptidase C14B family.

In terms of biological role, involved in cell death (apoptosis). The polypeptide is Metacaspase-1A (casA) (Aspergillus niger (strain ATCC MYA-4892 / CBS 513.88 / FGSC A1513)).